A 126-amino-acid polypeptide reads, in one-letter code: Large ribosomal subunit protein bL20 (126 aa).

The protein belongs to the bacterial ribosomal protein bL20 family.

Functionally, binds directly to 23S ribosomal RNA and is necessary for the in vitro assembly process of the 50S ribosomal subunit. It is not involved in the protein synthesizing functions of that subunit. The protein is Large ribosomal subunit protein bL20 of Parafrankia sp. (strain EAN1pec).